The sequence spans 381 residues: Gas vesicle protein C (381 aa).

7 consecutive repeat copies span residues 22-59 (QAFA…NSTN), 60-84 (DAFR…ADRR), 85-122 (DAFD…DETH), 123-160 (EAFD…VSVQ), 161-192 (GEFN…KDVA), 193-232 (DAFL…ETTE), and 233-274 (EAFA…IPPI). Residues 22 to 274 (QAFAAYADEF…TETEVDIPPI (253 aa)) are 7 X approximate tandem repeats. Residues 261 to 333 (AVTGTETEVD…EDDQFLDDET (73 aa)) form a disordered region. The segment covering 276 to 318 (DSVEPDGEDEDSKADDVEAEAEVETVEMEFGAEMDTEADEDVQ) has biased composition (acidic residues).

Belongs to the halobacterial gas vesicle GvpC family. Detected as 2 slightly different sizes in vivo; the proteins appears larger in SDS-PAGE probably due to the acidic tail.

It localises to the gas vesicle. Functionally, confers stability, involved in shaping gas vesicles (GV), hollow, gas filled proteinaceous nanostructures found in some microorganisms. They allow positioning of halobacteria at the optimal depth for growth in the poorly aerated, shallow brine pools of their habitat. Its function is as follows. Expression of a 9.5 kb mc-vac DNA fragment containing 2 divergently transcribed regions (gvpD-gvpE-gvpF-gvpG-gvpH-gvpI-gvpJ-gvpK-gvpL-gvpM and gvpA-gvpC-gvpN-gvpO) allows H.volcanii to produce gas vesicles. This chain is Gas vesicle protein C, found in Haloferax mediterranei (strain ATCC 33500 / DSM 1411 / JCM 8866 / NBRC 14739 / NCIMB 2177 / R-4) (Halobacterium mediterranei).